The following is a 115-amino-acid chain: Large ribosomal subunit protein bL20 (115 aa).

This sequence belongs to the bacterial ribosomal protein bL20 family.

Binds directly to 23S ribosomal RNA and is necessary for the in vitro assembly process of the 50S ribosomal subunit. It is not involved in the protein synthesizing functions of that subunit. The chain is Large ribosomal subunit protein bL20 from Prochlorococcus marinus (strain AS9601).